The chain runs to 396 residues: Acetate kinase (396 aa).

Asn-8 contacts Mg(2+). Residue Lys-15 coordinates ATP. Position 89 (Arg-89) interacts with substrate. The active-site Proton donor/acceptor is the Asp-146. Residues 206 to 210 (HLGNG), 281 to 283 (DLR), and 329 to 333 (GIGEN) each bind ATP. Position 382 (Glu-382) interacts with Mg(2+).

The protein belongs to the acetokinase family. In terms of assembly, homodimer. Requires Mg(2+) as cofactor. Mn(2+) serves as cofactor.

Its subcellular location is the cytoplasm. The enzyme catalyses acetate + ATP = acetyl phosphate + ADP. The protein operates within metabolic intermediate biosynthesis; acetyl-CoA biosynthesis; acetyl-CoA from acetate: step 1/2. In terms of biological role, catalyzes the formation of acetyl phosphate from acetate and ATP. Can also catalyze the reverse reaction. This Geobacillus kaustophilus (strain HTA426) protein is Acetate kinase.